Consider the following 186-residue polypeptide: Peptidyl-tRNA hydrolase (186 aa).

Residue Y14 coordinates tRNA. The active-site Proton acceptor is the H19. TRNA contacts are provided by Y61, N63, and N107.

It belongs to the PTH family. As to quaternary structure, monomer.

Its subcellular location is the cytoplasm. The enzyme catalyses an N-acyl-L-alpha-aminoacyl-tRNA + H2O = an N-acyl-L-amino acid + a tRNA + H(+). In terms of biological role, hydrolyzes ribosome-free peptidyl-tRNAs (with 1 or more amino acids incorporated), which drop off the ribosome during protein synthesis, or as a result of ribosome stalling. Functionally, catalyzes the release of premature peptidyl moieties from peptidyl-tRNA molecules trapped in stalled 50S ribosomal subunits, and thus maintains levels of free tRNAs and 50S ribosomes. The protein is Peptidyl-tRNA hydrolase of Helicobacter pylori (strain G27).